Here is a 205-residue protein sequence, read N- to C-terminus: Protein Nef (205 aa).

G2 is lipidated: N-myristoyl glycine; by host. Phosphoserine; by host is present on S6. Positions 62–65 (EEEE) are acidic; interacts with host PACS1 and PACS2; stabilizes the interaction of NEF/MHC-I with host AP1M1; necessary for MHC-I internalization. An SH3-binding; interaction with Src family tyrosine kinases region spans residues 69–78 (PVRPQVPVRP). The PxxP; stabilizes the interaction of NEF/MHC-I with host AP1M1; necessary for MHC-I internalization signature appears at 72 to 75 (PQVP). Positions 108-124 (DTLDLWVYHTQGYFPDW) are mediates dimerization, Nef-PTE1 interaction. Residues 148–180 (VDPEEVEKANEGENNCLLHPMSQHGMEDEDREV) are binding to ATP6V1H. The Dileucine internalization motif; necessary for CD4 internalization signature appears at 164-165 (LL). A Diacidic; necessary for CD4 internalization motif is present at residues 174–175 (ED).

Belongs to the lentivirus primate group Nef protein family. As to quaternary structure, monomer; cytosolic form. Homodimer; membrane bound form. Interacts with Nef associated p21-activated kinase (PAK2); this interaction activates PAK2. Associates with the Nef-MHC-I-AP1 complex; this complex is required for MHC-I internalization. Interacts (via C-terminus) with host PI3-kinase. Interacts with host PACS1; this interaction seems to be weak. Interacts with host PACS2. Interacts with host LCK and MAPK3; these interactions inhibit the kinase activity of the latter. Interacts with host ATP6V1H; this interaction may play a role in CD4 endocytosis. Associates with the CD4-Nef-AP2 complex; this complex is required for CD4 internalization. Interacts with host AP2 subunit alpha and AP2 subunit sigma2. Interacts with TCR-zeta chain; this interaction up-regulates the Fas ligand (FasL) surface expression. Interacts with host HCK, LYN, and SRC; these interactions activate the Src family kinases. Interacts with MAP3K5; this interaction inhibits the Fas and TNFR-mediated death signals. Interacts with beta-COP and PTE1. Interacts with human RACK1; this increases Nef phosphorylation by PKC. Interacts with TP53; this interaction decreases the half-life of TP53, protecting the infected cell against p53-mediated apoptosis. The virion-associated Nef proteins are cleaved by the viral protease to release the soluble C-terminal core protein. Nef is probably cleaved concomitantly with viral structural proteins on maturation of virus particles. Post-translationally, myristoylated. In terms of processing, phosphorylated on serine residues, probably by host PKCdelta and theta.

The protein localises to the host cell membrane. It is found in the virion. It localises to the secreted. Its subcellular location is the host Golgi apparatus membrane. Functionally, factor of infectivity and pathogenicity, required for optimal virus replication. Alters numerous pathways of T-lymphocyte function and down-regulates immunity surface molecules in order to evade host defense and increase viral infectivity. Alters the functionality of other immunity cells, like dendritic cells, monocytes/macrophages and NK cells. Its function is as follows. In infected CD4(+) T-lymphocytes, down-regulates the surface MHC-I, mature MHC-II, CD4, CD28, CCR5 and CXCR4 molecules. Mediates internalization and degradation of host CD4 through the interaction of with the cytoplasmic tail of CD4, the recruitment of AP-2 (clathrin adapter protein complex 2), internalization through clathrin coated pits, and subsequent transport to endosomes and lysosomes for degradation. Diverts host MHC-I molecules to the trans-Golgi network-associated endosomal compartments by an endocytic pathway to finally target them for degradation. MHC-I down-regulation may involve AP-1 (clathrin adapter protein complex 1) or possibly Src family kinase-ZAP70/Syk-PI3K cascade recruited by PACS2. In consequence infected cells are masked for immune recognition by cytotoxic T-lymphocytes. Decreasing the number of immune receptors also prevents reinfection by more HIV particles (superinfection). Down-regulates host SERINC3 and SERINC5 thereby excluding these proteins from the viral particles. Virion infectivity is drastically higher when SERINC3 or SERINC5 are excluded from the viral envelope, because these host antiviral proteins impair the membrane fusion event necessary for subsequent virion penetration. In terms of biological role, bypasses host T-cell signaling by inducing a transcriptional program nearly identical to that of anti-CD3 cell activation. Interaction with TCR-zeta chain up-regulates the Fas ligand (FasL). Increasing surface FasL molecules and decreasing surface MHC-I molecules on infected CD4(+) cells send attacking cytotoxic CD8+ T-lymphocytes into apoptosis. Plays a role in optimizing the host cell environment for viral replication without causing cell death by apoptosis. Protects the infected cells from apoptosis in order to keep them alive until the next virus generation is ready to strike. Inhibits the Fas and TNFR-mediated death signals by blocking MAP3K5/ASK1. Decreases the half-life of TP53, protecting the infected cell against p53-mediated apoptosis. Inhibits the apoptotic signals regulated by the Bcl-2 family proteins through the formation of a Nef/PI3-kinase/PAK2 complex that leads to activation of PAK2 and induces phosphorylation of host BAD. Functionally, extracellular Nef protein targets CD4(+) T-lymphocytes for apoptosis by interacting with CXCR4 surface receptors. This chain is Protein Nef, found in Human immunodeficiency virus type 1 group M subtype F1 (isolate VI850) (HIV-1).